A 36-amino-acid polypeptide reads, in one-letter code: Neurotoxin PRTx26An0C3 (36 aa).

Disulfide bonds link cysteine 3–cysteine 17, cysteine 10–cysteine 22, and cysteine 16–cysteine 34.

As to expression, expressed by the venom gland.

Its subcellular location is the secreted. Functionally, neurotoxin. Causes spastic paralysis and death in mice. Moderate inhibitor of L-type calcium channels (Cav1/CACNA1). In Phoneutria nigriventer (Brazilian armed spider), this protein is Neurotoxin PRTx26An0C3.